The following is a 217-amino-acid chain: Ribonuclease HII (217 aa).

One can recognise an RNase H type-2 domain in the interval 17–207; it reads KVIYGVDEAG…CVGQSVSGAR (191 aa). Residues Asp-23, Glu-24, and Asp-116 each contribute to the a divalent metal cation site.

This sequence belongs to the RNase HII family. Mn(2+) serves as cofactor. Requires Mg(2+) as cofactor.

The protein resides in the cytoplasm. It carries out the reaction Endonucleolytic cleavage to 5'-phosphomonoester.. In terms of biological role, endonuclease that specifically degrades the RNA of RNA-DNA hybrids. This is Ribonuclease HII from Nitrosomonas europaea (strain ATCC 19718 / CIP 103999 / KCTC 2705 / NBRC 14298).